Reading from the N-terminus, the 407-residue chain is Peptidase T (407 aa).

Position 82 (His-82) interacts with Zn(2+). The active site involves Asp-84. A Zn(2+)-binding site is contributed by Asp-143. The active-site Proton acceptor is the Glu-177. Zn(2+)-binding residues include Glu-178, Asp-200, and His-382.

It belongs to the peptidase M20B family. It depends on Zn(2+) as a cofactor.

It localises to the cytoplasm. The enzyme catalyses Release of the N-terminal residue from a tripeptide.. Functionally, cleaves the N-terminal amino acid of tripeptides. The protein is Peptidase T of Streptococcus pyogenes serotype M2 (strain MGAS10270).